A 237-amino-acid chain; its full sequence is MKLLIDAGNSRVKWALYQGEDCVRQGAAEHGELAGLAAVWRDLPLTGAWMSSVARREVADALAAAVPCPLHRVHAERRFGDVRNHYRNTAEQGADRWLAVLAARELCRGDVIVACAGTALTVEALTAEGDYLGGLILPGHGLMLQSLAQGTANLNRPAGEVVDFPQGTQDALASGAIAALAGAIAEQRRRLAERTGRAPATVILTGGDAARIAPWLAAPMQIVDNLVLMGLLKVANT.

An ATP-binding site is contributed by D6 to K13. Substrate contacts are provided by residues Y86 and G93 to R96. D95 serves as the catalytic Proton acceptor. ATP is bound at residue T118. T168 is a binding site for substrate.

This sequence belongs to the type III pantothenate kinase family. Homodimer. NH4(+) serves as cofactor. Requires K(+) as cofactor.

It is found in the cytoplasm. It carries out the reaction (R)-pantothenate + ATP = (R)-4'-phosphopantothenate + ADP + H(+). It participates in cofactor biosynthesis; coenzyme A biosynthesis; CoA from (R)-pantothenate: step 1/5. Functionally, catalyzes the phosphorylation of pantothenate (Pan), the first step in CoA biosynthesis. The sequence is that of Type III pantothenate kinase from Chromobacterium violaceum (strain ATCC 12472 / DSM 30191 / JCM 1249 / CCUG 213 / NBRC 12614 / NCIMB 9131 / NCTC 9757 / MK).